Consider the following 833-residue polypeptide: MTEEENLDMLLSLFAESEGQDLESPAAEEGEDNLDDLFDEDDDGEQYIEPEEAEEEKEEEEEEVSPGKSSSSDLNKSKEDLEAELKLMQEKMQKLQQQLEASQKTTPAQNKPAVQRQSTKSLTSPQAGVKTTPPTVRDSDGSPSNITAKLKNKQRTAHQPKAASSERQIPIGQSTNQPQPMRDGAKVNSMLKSPPLIKTPPTVRQPTPRLPVNQEVAVEKFSGLRLRKPRLSSIDIEQKMASRKLIRLSQLPDRLARDNLEDSDWVTFAVIINKITPQSKNNGKTFSIWKLNDLHNLEVNVSLFLFGSVHTDLWKTDTGTVIGILNPNPMKNKEGSNELSLTVDHPQKVLIIGEAMDFGTCKAKKKNGDSCTQLVNLYECQFCQYHVKAQYKKMSSKRAELQSSFTGSAPGKGRGRGSLKERLCQSDFHYGGMSSLACAPSMSAPQPKKQPTIQSALASIPTKKLVLNSGQVSGCSDDFRGLMSMPTPGALNIKRHLGQSKSSAVAGSSVQSVSASDLLKQQKEQHQQRMMARKKRAEEIQKRVLQSGGAPVASSRPNVSRGPLLSPKAASEGPKGSGSSLSGPAVPTLGRGFSEGEDIVFDMSPPSSKSLSATKLAAVRKLQAKGSVIVKEDPNAVKRKRANSGDITGRVERNIVKAKVTDENSASEEEEPAMKKRREQLEYIQSEEFQRILNAKSSNSWMMGEIEERAMQEYFEPLVQKEKMEEKMKSIREMKCRAVTCKTCKYTHFKPADRCVEEKHDYHWHDAVKRFFKCPCGQRKICLARMPHGACSHCGLFKWERDGMLKEKKGPKIGGELLMPRGEEQPKFLNSLK.

Positions 1-122 (MTEEENLDML…AVQRQSTKSL (122 aa)) are N-terminal domain. Residues 18–64 (EGQDLESPAAEEGEDNLDDLFDEDDDGEQYIEPEEAEEEKEEEEEEV) are compositionally biased toward acidic residues. A disordered region spans residues 18–208 (EGQDLESPAA…TPPTVRQPTP (191 aa)). Positions 70–108 (SSSDLNKSKEDLEAELKLMQEKMQKLQQQLEASQKTTPA) form a coiled coil. Residues 75 to 93 (NKSKEDLEAELKLMQEKMQ) show a composition bias toward basic and acidic residues. Polar residues-rich tracts occupy residues 115-126 (QRQSTKSLTSPQ) and 165-179 (SERQ…NQPQ). The segment at 202-360 (TVRQPTPRLP…IIGEAMDFGT (159 aa)) is OB-fold domain. Positions 361–386 (CKAKKKNGDSCTQLVNLYECQFCQYH) are zinc finger-like 1. 2 stretches are compositionally biased toward low complexity: residues 502–516 (SSAV…VSAS) and 571–583 (SEGP…SLSG). The interval 502 to 589 (SSAVAGSSVQ…SLSGPAVPTL (88 aa)) is disordered. Zinc finger-like regions lie at residues 741–760 (CKTC…EEKH) and 774–794 (CPCG…CSHC).

The protein belongs to the MCM10 family. In terms of assembly, self-associates.

The protein localises to the nucleus. Acts as a replication initiation factor that brings together the MCM2-7 helicase and the DNA polymerase alpha/primase complex in order to initiate DNA replication. Additionally, plays a role in preventing DNA damage during replication. The chain is Protein MCM10 homolog (mcm10) from Danio rerio (Zebrafish).